A 161-amino-acid polypeptide reads, in one-letter code: tRNA-specific adenosine deaminase (161 aa).

The CMP/dCMP-type deaminase domain maps to 2-120 (TQDELYMKEA…GTLMNLLQEE (119 aa)). Zn(2+) is bound at residue His53. Glu55 serves as the catalytic Proton donor. Positions 83 and 86 each coordinate Zn(2+).

Belongs to the cytidine and deoxycytidylate deaminase family. In terms of assembly, homodimer. Zn(2+) is required as a cofactor.

The catalysed reaction is adenosine(34) in tRNA + H2O + H(+) = inosine(34) in tRNA + NH4(+). In terms of biological role, catalyzes the deamination of adenosine to inosine at the wobble position 34 of tRNA(Arg2). The sequence is that of tRNA-specific adenosine deaminase from Bacillus subtilis (strain 168).